Consider the following 31-residue polypeptide: Cytochrome b6-f complex subunit 6 (31 aa).

Residues 4–26 traverse the membrane as a helical segment; sequence ITSYFGFLLAASTITTALFIGLS.

The protein belongs to the PetL family. As to quaternary structure, the 4 large subunits of the cytochrome b6-f complex are cytochrome b6, subunit IV (17 kDa polypeptide, PetD), cytochrome f and the Rieske protein, while the 4 small subunits are PetG, PetL, PetM and PetN. The complex functions as a dimer.

The protein resides in the plastid. The protein localises to the chloroplast thylakoid membrane. Its function is as follows. Component of the cytochrome b6-f complex, which mediates electron transfer between photosystem II (PSII) and photosystem I (PSI), cyclic electron flow around PSI, and state transitions. PetL is important for photoautotrophic growth as well as for electron transfer efficiency and stability of the cytochrome b6-f complex. In Acorus calamus (Sweet flag), this protein is Cytochrome b6-f complex subunit 6.